Consider the following 91-residue polypeptide: Anther-specific protein RTS (91 aa).

Positions 1–21 are cleaved as a signal peptide; that stretch reads MVRVGAAAAVLVLAAAAAAMA.

Required for tapetum and pollen development. The chain is Anther-specific protein RTS from Oryza sativa subsp. japonica (Rice).